A 229-amino-acid polypeptide reads, in one-letter code: tRNA (guanosine(18)-2'-O)-methyltransferase (229 aa).

Positions 96, 139, and 148 each coordinate S-adenosyl-L-methionine.

It belongs to the class IV-like SAM-binding methyltransferase superfamily. RNA methyltransferase TrmH family.

The enzyme catalyses guanosine(18) in tRNA + S-adenosyl-L-methionine = 2'-O-methylguanosine(18) in tRNA + S-adenosyl-L-homocysteine + H(+). Functionally, catalyzes the 2'-O methylation of guanosine at position 18 in tRNA. In Escherichia coli O157:H7, this protein is tRNA (guanosine(18)-2'-O)-methyltransferase.